The primary structure comprises 380 residues: Chaperone protein DnaJ (380 aa).

Residues 5 to 70 (DYYEALGVAR…RKRTAYDQFG (66 aa)) form the J domain. Residues 137–215 (GTTAKIRIPT…CRGEGRVREH (79 aa)) form a CR-type zinc finger. Zn(2+) is bound by residues Cys-150, Cys-153, Cys-167, Cys-170, Cys-189, Cys-192, Cys-203, and Cys-206. CXXCXGXG motif repeat units lie at residues 150–157 (CKACEGSG), 167–174 (CPTCGGHG), 189–196 (CPRCHGSG), and 203–210 (CSTCRGEG). The disordered stretch occupies residues 222–247 (IPPGVDTGDRIRLTGEGEAGESGGPP).

This sequence belongs to the DnaJ family. Homodimer. Zn(2+) is required as a cofactor.

The protein resides in the cytoplasm. Functionally, participates actively in the response to hyperosmotic and heat shock by preventing the aggregation of stress-denatured proteins and by disaggregating proteins, also in an autonomous, DnaK-independent fashion. Unfolded proteins bind initially to DnaJ; upon interaction with the DnaJ-bound protein, DnaK hydrolyzes its bound ATP, resulting in the formation of a stable complex. GrpE releases ADP from DnaK; ATP binding to DnaK triggers the release of the substrate protein, thus completing the reaction cycle. Several rounds of ATP-dependent interactions between DnaJ, DnaK and GrpE are required for fully efficient folding. Also involved, together with DnaK and GrpE, in the DNA replication of plasmids through activation of initiation proteins. In Nitrosococcus oceani (strain ATCC 19707 / BCRC 17464 / JCM 30415 / NCIMB 11848 / C-107), this protein is Chaperone protein DnaJ.